The primary structure comprises 156 residues: Small ribosomal subunit protein uS7 (156 aa).

This sequence belongs to the universal ribosomal protein uS7 family. Part of the 30S ribosomal subunit. Contacts proteins S9 and S11.

Its function is as follows. One of the primary rRNA binding proteins, it binds directly to 16S rRNA where it nucleates assembly of the head domain of the 30S subunit. Is located at the subunit interface close to the decoding center, probably blocks exit of the E-site tRNA. This Arthrospira platensis (Spirulina platensis) protein is Small ribosomal subunit protein uS7.